The sequence spans 381 residues: (S)-scoulerine 9-O-methyltransferase (381 aa).

Positions 223, 246, 266, 267, and 280 each coordinate S-adenosyl-L-methionine. The active-site Proton acceptor is the His284.

Belongs to the class I-like SAM-binding methyltransferase superfamily. Cation-independent O-methyltransferase family. COMT subfamily.

It carries out the reaction (S)-scoulerine + S-adenosyl-L-methionine = (S)-tetrahydrocolumbamine + S-adenosyl-L-homocysteine + H(+). Its function is as follows. Produces a precursor of protoberberine alkaloids. The sequence is that of (S)-scoulerine 9-O-methyltransferase (SMT) from Coptis japonica (Japanese goldthread).